The primary structure comprises 457 residues: Dihydrolipoyl dehydrogenase (457 aa).

Residues 32 to 40 (EKEYFGGVC), Lys49, and Ala113 each bind FAD. A disulfide bridge connects residues Cys40 and Cys45. Residues 178–182 (GGGVI), Val235, and 262–265 (SIGR) contribute to the NAD(+) site. FAD is bound by residues Asp303 and Ala311. The active-site Proton acceptor is the His437.

This sequence belongs to the class-I pyridine nucleotide-disulfide oxidoreductase family. In terms of assembly, homodimer. The cofactor is FAD.

Its subcellular location is the cytoplasm. The catalysed reaction is N(6)-[(R)-dihydrolipoyl]-L-lysyl-[protein] + NAD(+) = N(6)-[(R)-lipoyl]-L-lysyl-[protein] + NADH + H(+). In terms of biological role, lipoamide dehydrogenase is a component of the alpha-ketoacid dehydrogenase complexes. In Mycoplasma pneumoniae (strain ATCC 29342 / M129 / Subtype 1) (Mycoplasmoides pneumoniae), this protein is Dihydrolipoyl dehydrogenase (pdhD).